Here is a 424-residue protein sequence, read N- to C-terminus: Putative chloroquine resistance transporter (424 aa).

Topologically, residues 1 to 56 are cytoplasmic; it reads MTGMKKGKNKKKNVKNDERYKELDSLISNDSEIGNNSRWGGAKRICKLIGNEMRNN. The helical transmembrane segment at 57–77 threads the bilayer; sequence IYVYLLSILYLCVSVMNKVFS. The Vacuolar portion of the chain corresponds to 78-88; that stretch reads KRTLNKIGNYS. The N-linked (GlcNAc...) asparagine glycan is linked to asparagine 86. A helical membrane pass occupies residues 89–109; sequence FVTSEVHNMICTIVFQLLYFI. Topologically, residues 110 to 125 are cytoplasmic; the sequence is YRKTSNPASRNESQKN. The helical transmembrane segment at 126-146 threads the bilayer; it reads FGWQFFLISLLDASTVIITMI. At 147–156 the chain is on the vacuolar side; the sequence is GLTRTTGNIQ. A helical membrane pass occupies residues 157–177; it reads SFIMQLIIPVNMYFCFIFLGY. Residues 178-180 are Cytoplasmic-facing; that stretch reads RYH. The helical transmembrane segment at 181–201 threads the bilayer; it reads LFNYLGAFIILITIAAVETVL. Residues 202-209 are Vacuolar-facing; sequence SYETQSDN. The chain crosses the membrane as a helical span at residues 210 to 230; it reads SIIFNLIMIFALIPLSFSNMT. Topologically, residues 231-248 are cytoplasmic; it reads REVVFKKHKINIIRLNAM. Residues 249–269 traverse the membrane as a helical segment; sequence VALFQFFTSLLVLPVYNISFL. The Vacuolar segment spans residues 270-317; that stretch reads KEIYMPFSEMGTNINDGLRCLFYGQSTIVENCGVGMVKMCDQCEGAWK. 2 disulfides stabilise this stretch: cysteine 289–cysteine 312 and cysteine 301–cysteine 309. Residues 318 to 338 form a helical membrane-spanning segment; that stretch reads TFITYSFFNICDNLLVCYIID. At 339-346 the chain is on the cytoplasmic side; it reads KFSTMTYT. A helical transmembrane segment spans residues 347–367; the sequence is IVSCIQGPAITIAYYFKFLAG. At 368–377 the chain is on the vacuolar side; that stretch reads DVVRQPRLLD. A helical transmembrane segment spans residues 378 to 398; sequence FLTLFGYLLGTIIYRIGNIIL. Topologically, residues 399-424 are cytoplasmic; sequence EKKKMLKALNTDGSEAELTSIETSTA.

It belongs to the CRT-like transporter family.

The protein localises to the vacuole membrane. Functionally, nutrient transporter. Involved in maintaining the osmotic homeostasis of the digestive vacuole. This is Putative chloroquine resistance transporter from Plasmodium chabaudi.